A 1368-amino-acid polypeptide reads, in one-letter code: DNA-directed RNA polymerase subunit beta (1368 aa).

Belongs to the RNA polymerase beta chain family. As to quaternary structure, the RNAP catalytic core consists of 2 alpha, 1 beta, 1 beta' and 1 omega subunit. When a sigma factor is associated with the core the holoenzyme is formed, which can initiate transcription.

It carries out the reaction RNA(n) + a ribonucleoside 5'-triphosphate = RNA(n+1) + diphosphate. Functionally, DNA-dependent RNA polymerase catalyzes the transcription of DNA into RNA using the four ribonucleoside triphosphates as substrates. In Burkholderia mallei (strain SAVP1), this protein is DNA-directed RNA polymerase subunit beta.